Consider the following 482-residue polypeptide: Guanine nucleotide exchange factor SRM1 (482 aa).

Residues 1–11 show a composition bias toward polar residues; it reads MVKRTVATNGD. The disordered stretch occupies residues 1-22; that stretch reads MVKRTVATNGDASGAHRAKKMS. Positions 15 to 26 match the Nuclear localization signal motif; that stretch reads AHRAKKMSKTHA. 7 RCC1 repeats span residues 45 to 101, 103 to 152, 183 to 238, 239 to 291, 292 to 347, 349 to 411, and 412 to 466; these read PLDI…ALDE, SNVW…TPAK, NGEV…FLDE, EGMV…ALTK, DNKL…ILSQ, GDLY…AVAQ, and NGIA…SGGV. The tract at residues 128-158 is disordered; the sequence is KDMDADDSSDDEDGDLNELESTPAKIPRESF. A compositionally biased stretch (acidic residues) spans 131 to 145; that stretch reads DADDSSDDEDGDLNE. Phosphoserine is present on residues S135 and S136.

In terms of assembly, component of a multicomponent complex composed of six to seven proteins, which has a collective molecular mass greater than 150 kDa. Interacts with GSP1 and YRB2. Phosphorylated; possibly by KSP1.

Its subcellular location is the nucleus. Guanine nucleotide exchange factor that promotes the exchange of GSP1/GSP2-bound GDP by GTP and controls RNA metabolism and transport. Involved in yeast pheromone response pathway and in mRNA metabolism. Involved in nuclear pore complex (NPC) assembly and required for mRNA and ribosome nuclear export. Binds chromatin and is involved NPC-mediated transcriptional control. The protein is Guanine nucleotide exchange factor SRM1 (SRM1) of Saccharomyces cerevisiae (strain ATCC 204508 / S288c) (Baker's yeast).